Reading from the N-terminus, the 283-residue chain is RNase adapter protein RapZ (283 aa).

8–15 (GRSGSGKS) provides a ligand contact to ATP. 56 to 59 (DVRN) contributes to the GTP binding site. The segment at 266–283 (RSRGKNVQSRHRTLEKRK) is RNA-binding.

The protein belongs to the RapZ-like family. RapZ subfamily. Homotrimer.

Its function is as follows. Modulates the synthesis of GlmS, by affecting the processing and stability of the regulatory small RNA GlmZ. When glucosamine-6-phosphate (GlcN6P) concentrations are high in the cell, RapZ binds GlmZ and targets it to cleavage by RNase E. Consequently, GlmZ is inactivated and unable to activate GlmS synthesis. Under low GlcN6P concentrations, RapZ is sequestered and inactivated by an other regulatory small RNA, GlmY, preventing GlmZ degradation and leading to synthesis of GlmS. This Photorhabdus laumondii subsp. laumondii (strain DSM 15139 / CIP 105565 / TT01) (Photorhabdus luminescens subsp. laumondii) protein is RNase adapter protein RapZ.